Consider the following 523-residue polypeptide: Ubiquilin (523 aa).

The 76-residue stretch at 2-77 (VKINIKSSTD…VHLVKGAAPP (76 aa)) folds into the Ubiquitin-like domain. The tract at residues 70–99 (LVKGAAPPPPPPVEQQVPTPSNTQPQGIPG) is disordered. STI1 domains are found at residues 100 to 135 (VPQN…FRDM) and 139 to 178 (NPEM…MREM). Residues 215–227 (NQQAASQNQTNSN) show a composition bias toward low complexity. A disordered region spans residues 215-325 (NQQAASQNQT…ASMFGGGGGG (111 aa)). The span at 228–241 (PIQTNTDANPNSQP) shows a compositional bias: polar residues. Over residues 245 to 278 (PWSTNSSSTSSNPTSSSPSSRPTTGSSTNTGASN) the composition is skewed to low complexity. The span at 285 to 296 (SGGGGGMGGGTN) shows a compositional bias: gly residues. Residues 297-310 (NTGTNNTGSTNNTG) are compositionally biased toward low complexity. STI1 domains lie at 339-380 (DPER…RQMM) and 383-415 (NPQL…QQAM). The region spanning 480–523 (PPEQRFRLQLEQLEELGFVDRAANISALTSTNGNINLAIDRLLR) is the UBA domain.

Its function is as follows. Stable protein which acts as an antagonist of nosA by repressing cellular differentiation after the tight-aggregate stage, when cells differentiate into two precursor cell types, prespore and prestalk cells, prior to the formation of fruiting bodies. The protein is Ubiquilin (ubqln) of Dictyostelium discoideum (Social amoeba).